The chain runs to 451 residues: Serine/threonine-protein phosphatase 2A 55 kDa regulatory subunit B delta isoform (451 aa).

WD repeat units lie at residues 30–69 (AEAD…KSRP), 95–136 (EIEE…KRAE), 179–217 (AHTY…RSFN), 228–268 (ELTE…LCDR), 287–325 (EIIS…RPVE), 342–383 (ENDC…DITL), and 418–451 (DFNK…DKIN).

Belongs to the phosphatase 2A regulatory subunit B family. PP2A consists of a common heterodimeric core enzyme, composed of a 36 kDa catalytic subunit (subunit C) and a 65 kDa constant regulatory subunit (PR65 or subunit A), that associates with a variety of regulatory subunits.

Its subcellular location is the cytoplasm. Substrate-recognition subunit of protein phosphatase 2A (PP2A) that plays a key role in cell cycle by controlling mitosis entry and exit. The activity of PP2A complexes containing PPP2R2D (PR55-delta) fluctuate during the cell cycle: the activity is high in interphase and low in mitosis. The chain is Serine/threonine-protein phosphatase 2A 55 kDa regulatory subunit B delta isoform (PPP2R2D) from Gallus gallus (Chicken).